We begin with the raw amino-acid sequence, 517 residues long: Keratin-associated protein 16-1 (517 aa).

A run of 11 repeats spans residues 73–77 (CCDPV), 93–97 (CCEAT), 128–132 (CCQPV), 153–157 (CCEPA), 168–172 (CCQPV), 198–202 (CCQPV), 208–212 (CCSAV), 228–232 (CCQPV), 248–252 (CCDPS), 283–287 (CCVQS), and 303–307 (CCVSS). Residues 73–307 (CCDPVICEPS…CQEPSCCVSS (235 aa)) are 11 X 5 AA repeats of C-C-X(3). The disordered stretch occupies residues 483–517 (VSEEAPCQPTEAKPISPTTREAAAAQPAASKPANC). Over residues 504-517 (AAAAQPAASKPANC) the composition is skewed to low complexity.

The protein belongs to the KRTAP type 16 family.

The protein is Keratin-associated protein 16-1 (KRTAP16-1) of Homo sapiens (Human).